The primary structure comprises 400 residues: Calsequestrin-2 (400 aa).

Positions 1-19 (MKRTHLFIVGVYVLSSCRA) are cleaved as a signal peptide. Tyr282 bears the Phosphotyrosine mark. Asn335 carries an N-linked (GlcNAc...) asparagine glycan. The segment at 365–400 (VLSGKINTEDDDDEDDDDDNSDEEDNDDSDDDDDDE) is disordered. The segment covering 373–400 (EDDDDEDDDDDNSDEEDNDDSDDDDDDE) has biased composition (acidic residues).

The protein belongs to the calsequestrin family. Monomer, homodimer and homooligomer. Mostly monomeric in the absence of calcium. Forms higher oligomers in a calcium-dependent manner. Dimers associate to form tetramers, that then form linear homomer chains. Interacts with ASPH and TRDN. Phosphorylation in the C-terminus, probably by CK2, moderately increases calcium buffering capacity. Post-translationally, N-glycosylated.

It is found in the sarcoplasmic reticulum lumen. Functionally, calsequestrin is a high-capacity, moderate affinity, calcium-binding protein and thus acts as an internal calcium store in muscle. Calcium ions are bound by clusters of acidic residues at the protein surface, especially at the interface between subunits. Can bind around 60 Ca(2+) ions. Regulates the release of lumenal Ca(2+) via the calcium release channel RYR2; this plays an important role in triggering muscle contraction. Plays a role in excitation-contraction coupling in the heart and in regulating the rate of heart beats. The protein is Calsequestrin-2 (CASQ2) of Pongo abelii (Sumatran orangutan).